A 428-amino-acid chain; its full sequence is Serine--tRNA ligase (428 aa).

An L-serine-binding site is contributed by 235–237 (TAE). 266-268 (RSE) provides a ligand contact to ATP. Glu289 provides a ligand contact to L-serine. 353–356 (EISS) contributes to the ATP binding site. L-serine is bound at residue Ser389.

It belongs to the class-II aminoacyl-tRNA synthetase family. Type-1 seryl-tRNA synthetase subfamily. As to quaternary structure, homodimer. The tRNA molecule binds across the dimer.

It localises to the cytoplasm. It catalyses the reaction tRNA(Ser) + L-serine + ATP = L-seryl-tRNA(Ser) + AMP + diphosphate + H(+). The catalysed reaction is tRNA(Sec) + L-serine + ATP = L-seryl-tRNA(Sec) + AMP + diphosphate + H(+). It participates in aminoacyl-tRNA biosynthesis; selenocysteinyl-tRNA(Sec) biosynthesis; L-seryl-tRNA(Sec) from L-serine and tRNA(Sec): step 1/1. Functionally, catalyzes the attachment of serine to tRNA(Ser). Is also able to aminoacylate tRNA(Sec) with serine, to form the misacylated tRNA L-seryl-tRNA(Sec), which will be further converted into selenocysteinyl-tRNA(Sec). The protein is Serine--tRNA ligase of Shewanella baltica (strain OS223).